The following is a 118-amino-acid chain: Ribonuclease P protein component (118 aa).

This sequence belongs to the RnpA family. As to quaternary structure, consists of a catalytic RNA component (M1 or rnpB) and a protein subunit.

The catalysed reaction is Endonucleolytic cleavage of RNA, removing 5'-extranucleotides from tRNA precursor.. RNaseP catalyzes the removal of the 5'-leader sequence from pre-tRNA to produce the mature 5'-terminus. It can also cleave other RNA substrates such as 4.5S RNA. The protein component plays an auxiliary but essential role in vivo by binding to the 5'-leader sequence and broadening the substrate specificity of the ribozyme. In Vibrio campbellii (strain ATCC BAA-1116), this protein is Ribonuclease P protein component.